Here is a 379-residue protein sequence, read N- to C-terminus: Queuine tRNA-ribosyltransferase (379 aa).

Asp-94 (proton acceptor) is an active-site residue. Residues 94–98, Asp-148, Gln-191, and Gly-218 contribute to the substrate site; that span reads DSGGF. The RNA binding stretch occupies residues 249–255; sequence GVGSPDS. The Nucleophile role is filled by Asp-268. The RNA binding; important for wobble base 34 recognition stretch occupies residues 273–277; that stretch reads TRIAR. Zn(2+) contacts are provided by Cys-306, Cys-308, Cys-311, and His-337.

The protein belongs to the queuine tRNA-ribosyltransferase family. As to quaternary structure, homodimer. Within each dimer, one monomer is responsible for RNA recognition and catalysis, while the other monomer binds to the replacement base PreQ1. Zn(2+) serves as cofactor.

The enzyme catalyses 7-aminomethyl-7-carbaguanine + guanosine(34) in tRNA = 7-aminomethyl-7-carbaguanosine(34) in tRNA + guanine. It participates in tRNA modification; tRNA-queuosine biosynthesis. Functionally, catalyzes the base-exchange of a guanine (G) residue with the queuine precursor 7-aminomethyl-7-deazaguanine (PreQ1) at position 34 (anticodon wobble position) in tRNAs with GU(N) anticodons (tRNA-Asp, -Asn, -His and -Tyr). Catalysis occurs through a double-displacement mechanism. The nucleophile active site attacks the C1' of nucleotide 34 to detach the guanine base from the RNA, forming a covalent enzyme-RNA intermediate. The proton acceptor active site deprotonates the incoming PreQ1, allowing a nucleophilic attack on the C1' of the ribose to form the product. After dissociation, two additional enzymatic reactions on the tRNA convert PreQ1 to queuine (Q), resulting in the hypermodified nucleoside queuosine (7-(((4,5-cis-dihydroxy-2-cyclopenten-1-yl)amino)methyl)-7-deazaguanosine). This is Queuine tRNA-ribosyltransferase from Bacillus mycoides (strain KBAB4) (Bacillus weihenstephanensis).